The sequence spans 445 residues: 3-phosphoshikimate 1-carboxyvinyltransferase (445 aa).

The interval 1 to 20 is disordered; sequence MSTSAAPTPLESRASGPLSG. Residues Lys28, Ser29, and Arg33 each coordinate 3-phosphoshikimate. Residue Lys28 coordinates phosphoenolpyruvate. Phosphoenolpyruvate-binding residues include Gly101 and Arg129. 3-phosphoshikimate-binding residues include Ser175, Gln177, Asp328, and Lys355. Position 177 (Gln177) interacts with phosphoenolpyruvate. Asp328 acts as the Proton acceptor in catalysis. Residues Arg359 and Arg402 each contribute to the phosphoenolpyruvate site.

Belongs to the EPSP synthase family. As to quaternary structure, monomer.

The protein localises to the cytoplasm. It carries out the reaction 3-phosphoshikimate + phosphoenolpyruvate = 5-O-(1-carboxyvinyl)-3-phosphoshikimate + phosphate. It participates in metabolic intermediate biosynthesis; chorismate biosynthesis; chorismate from D-erythrose 4-phosphate and phosphoenolpyruvate: step 6/7. Catalyzes the transfer of the enolpyruvyl moiety of phosphoenolpyruvate (PEP) to the 5-hydroxyl of shikimate-3-phosphate (S3P) to produce enolpyruvyl shikimate-3-phosphate and inorganic phosphate. The sequence is that of 3-phosphoshikimate 1-carboxyvinyltransferase from Bradyrhizobium sp. (strain ORS 278).